A 583-amino-acid polypeptide reads, in one-letter code: Trehalase (583 aa).

A signal peptide spans 1–23 (MPGRTWELCLLLLLGLGLGSQEA). Residue asparagine 78 is glycosylated (N-linked (GlcNAc...) asparagine). Substrate contacts are provided by residues arginine 168, 175–176 (WD), asparagine 212, and 221–223 (RSQ). Residues asparagine 239 and asparagine 261 are each glycosylated (N-linked (GlcNAc...) asparagine). Substrate is bound by residues 286 to 288 (RPE) and glycine 319. The Proton donor/acceptor role is filled by aspartate 321. Asparagine 369 carries N-linked (GlcNAc...) asparagine glycosylation. Glutamate 514 (proton donor/acceptor) is an active-site residue. Residue glutamate 529 participates in substrate binding. The GPI-anchor amidated serine moiety is linked to residue serine 556. Residues 557–583 (GAKLAFLEPHCLAATLLPSLLLSLLPW) constitute a propeptide, removed in mature form.

It belongs to the glycosyl hydrolase 37 family. In terms of assembly, homodimer; disulfide-linked. As to expression, expressed in kidney, liver and small intestine. Also more weakly expressed in pancreas.

It is found in the cell membrane. It catalyses the reaction alpha,alpha-trehalose + H2O = alpha-D-glucose + beta-D-glucose. Functionally, intestinal trehalase is probably involved in the hydrolysis of ingested trehalose. The polypeptide is Trehalase (Homo sapiens (Human)).